The sequence spans 468 residues: Kynureninase 2 (468 aa).

Pyridoxal 5'-phosphate-binding positions include L134, T135, 162–165 (FPSD), D247, H250, and Y272. The residue at position 273 (K273) is an N6-(pyridoxal phosphate)lysine. The pyridoxal 5'-phosphate site is built by W312 and N340.

The protein belongs to the kynureninase family. In terms of assembly, homodimer. Requires pyridoxal 5'-phosphate as cofactor.

It localises to the cytoplasm. It carries out the reaction L-kynurenine + H2O = anthranilate + L-alanine + H(+). The catalysed reaction is 3-hydroxy-L-kynurenine + H2O = 3-hydroxyanthranilate + L-alanine + H(+). Its pathway is amino-acid degradation; L-kynurenine degradation; L-alanine and anthranilate from L-kynurenine: step 1/1. The protein operates within cofactor biosynthesis; NAD(+) biosynthesis; quinolinate from L-kynurenine: step 2/3. Its function is as follows. Catalyzes the cleavage of L-kynurenine (L-Kyn) and L-3-hydroxykynurenine (L-3OHKyn) into anthranilic acid (AA) and 3-hydroxyanthranilic acid (3-OHAA), respectively. The protein is Kynureninase 2 (bna5-2) of Aspergillus oryzae (strain ATCC 42149 / RIB 40) (Yellow koji mold).